The sequence spans 341 residues: L-threonine 3-dehydrogenase (341 aa).

Cysteine 38 contributes to the Zn(2+) binding site. Catalysis depends on charge relay system residues threonine 40 and histidine 43. Residues histidine 63, glutamate 64, cysteine 93, cysteine 96, cysteine 99, and cysteine 107 each coordinate Zn(2+). Residues isoleucine 175, aspartate 195, arginine 200, 262–264, and 286–287 contribute to the NAD(+) site; these read LGI and IY.

The protein belongs to the zinc-containing alcohol dehydrogenase family. Homotetramer. It depends on Zn(2+) as a cofactor.

Its subcellular location is the cytoplasm. The catalysed reaction is L-threonine + NAD(+) = (2S)-2-amino-3-oxobutanoate + NADH + H(+). Its pathway is amino-acid degradation; L-threonine degradation via oxydo-reductase pathway; glycine from L-threonine: step 1/2. Catalyzes the NAD(+)-dependent oxidation of L-threonine to 2-amino-3-ketobutyrate. This Shewanella woodyi (strain ATCC 51908 / MS32) protein is L-threonine 3-dehydrogenase.